An 859-amino-acid chain; its full sequence is MQEQYNPSEIEALVQKHWHDNKTFEVTEDANKEKFYCLSMFPYPSGRLHMGHVRNYTIGDVVARFQRLQGKNVLQPIGWDSFGLPAENAAINNKTAPAPWTYQNIEYMKNQLKLLGFGYDWSREIATCTPEYYRWEQWFFTKLYEKGLVYKKTASVNWCPNDETVLANEQVQDGCCWRCDTPVEQKEIPQWFIKITAYAEELLNDIDTLDGWPEQVKTMQRNWIGRSEGVEMTFGVAGSDKSFDIYTTRPDTLMGVTYVAIAAGHPLAELAAQSNPELAQFIEECKNSTTSEADLATMEKRGVATGLYAIHPISGKQVPIWAANFVLMNYGTGAVMSVPGHDQRDYEFAKKYNLPIEAVIKPVDGELDISEAAYTEKGVLFNSGEFDGLDFDGAFNAIADKLVAEGKGKRQVNYRLRDWGVSRQRYWGAPIPMVTLADGTVIPTPEDQLPVILPEDVVMDGIQSPIKADKEWAKTQVNGQDALRETDTFDTFMESSWYYARYCSPQADQMLDPTKANYWLPVDQYIGGIEHACMHLLYFRFFHKLLRDAGLVNSNEPAKQLLTQGMVLADAFYYTNDKGARVWVSPLDVVTTEKDDKGRVTKAIDKDGNELVYTGMCKMSKSKNNGIDPQVMVEKYGADTVRLFMMFASPPELTLEWQESGVEGAHRFIKRLWKLASDYVAQDNSEALDVSKLTSEQKALRREVHKTIAKVTDDIGRRQMFNTAVAAVMELMNHLQKAPQTTGQDRAIIGEALTAVVRLLYPIIPHVSFTLWNELGNTNSIEDSQWPVVDESALVEDSKLIVVQVNGKVRAKITVAADADQASVEALGMADEQVIKYLDGVTVRKVIYVPGKLLSIVAN.

The 'HIGH' region signature appears at 42 to 52; sequence PYPSGRLHMGH. The 'KMSKS' region signature appears at 618-622; sequence KMSKS. Residue Lys-621 coordinates ATP.

Belongs to the class-I aminoacyl-tRNA synthetase family.

Its subcellular location is the cytoplasm. It catalyses the reaction tRNA(Leu) + L-leucine + ATP = L-leucyl-tRNA(Leu) + AMP + diphosphate. The polypeptide is Leucine--tRNA ligase (Shewanella sp. (strain MR-7)).